We begin with the raw amino-acid sequence, 368 residues long: Cyclic GMP-AMP synthase-like receptor (368 aa).

Residues serine 60 and 72 to 74 (EYD) contribute to the ATP site. The Mg(2+) site is built by glutamate 72, aspartate 74, and aspartate 190. Residues aspartate 190 and 229–236 (RASFYRQE) each bind GTP. Residues 233-236 (YRQE), lysine 254, and 268-272 (SYFIK) each bind ATP.

This sequence belongs to the mab-21 family. Mg(2+) is required as a cofactor. The cofactor is Mn(2+).

It catalyses the reaction GTP + ATP = 3',2'-cGAMP + 2 diphosphate. The enzyme catalyses GTP + ATP = pppA(2'-5')pG + diphosphate. The catalysed reaction is pppA(2'-5')pG = 3',2'-cGAMP + diphosphate. The enzyme activity is specifically activated by double-stranded RNA (dsRNA). Its function is as follows. Nucleotidyltransferase that catalyzes the formation of cyclic GMP-AMP (3',2'-cGAMP) from ATP and GTP and plays a key role in innate immunity. Synthesizes 3',2'-cGAMP in a two-step reaction through production of the linear intermediate pppA(2'-5')pG. Acts as a key sensor of double-stranded RNA (dsRNA), the presence of dsRNA in the cytoplasm being a danger signal that triggers the immune responses. Directly binds dsRNA, activating the nucleotidyltransferase activity, leading to synthesis of 3',2'-cGAMP, a second messenger that binds to and activates Sting, thereby triggering the antiviral immune response via activation of the NF-kappa-B transcription factor Rel (Relish). This chain is Cyclic GMP-AMP synthase-like receptor, found in Lucilia cuprina (Green bottle fly).